The sequence spans 227 residues: Enolase-phosphatase E1 (227 aa).

It belongs to the HAD-like hydrolase superfamily. MasA/MtnC family. In terms of assembly, monomer. Mg(2+) serves as cofactor.

It catalyses the reaction 5-methylsulfanyl-2,3-dioxopentyl phosphate + H2O = 1,2-dihydroxy-5-(methylsulfanyl)pent-1-en-3-one + phosphate. Its pathway is amino-acid biosynthesis; L-methionine biosynthesis via salvage pathway; L-methionine from S-methyl-5-thio-alpha-D-ribose 1-phosphate: step 3/6. The protein operates within amino-acid biosynthesis; L-methionine biosynthesis via salvage pathway; L-methionine from S-methyl-5-thio-alpha-D-ribose 1-phosphate: step 4/6. Bifunctional enzyme that catalyzes the enolization of 2,3-diketo-5-methylthiopentyl-1-phosphate (DK-MTP-1-P) into the intermediate 2-hydroxy-3-keto-5-methylthiopentenyl-1-phosphate (HK-MTPenyl-1-P), which is then dephosphorylated to form the acireductone 1,2-dihydroxy-3-keto-5-methylthiopentene (DHK-MTPene). In Gluconobacter oxydans (strain 621H) (Gluconobacter suboxydans), this protein is Enolase-phosphatase E1.